The primary structure comprises 234 residues: Toxic shock syndrome toxin-1 (234 aa).

Positions 1 to 40 (MNKKLLMNFFIVSPLLLATTATDFTPVPLSSNQIIKTAKA) are cleaved as a signal peptide.

Belongs to the staphylococcal/streptococcal toxin family.

It localises to the secreted. Responsible for the symptoms of toxic shock syndrome. The sequence is that of Toxic shock syndrome toxin-1 (tst) from Staphylococcus aureus.